A 197-amino-acid polypeptide reads, in one-letter code: Glycerol-3-phosphate acyltransferase (197 aa).

Transmembrane regions (helical) follow at residues 1 to 21, 50 to 70, 77 to 97, 111 to 131, 137 to 157, and 158 to 178; these read MNIL…GFLI, WPAL…VKIA, GLIE…PIWL, MFLA…LIVL, VSLS…FYLG, and KFMH…IWKH.

This sequence belongs to the PlsY family. As to quaternary structure, probably interacts with PlsX.

The protein resides in the cell inner membrane. The enzyme catalyses an acyl phosphate + sn-glycerol 3-phosphate = a 1-acyl-sn-glycero-3-phosphate + phosphate. The protein operates within lipid metabolism; phospholipid metabolism. In terms of biological role, catalyzes the transfer of an acyl group from acyl-phosphate (acyl-PO(4)) to glycerol-3-phosphate (G3P) to form lysophosphatidic acid (LPA). This enzyme utilizes acyl-phosphate as fatty acyl donor, but not acyl-CoA or acyl-ACP. This chain is Glycerol-3-phosphate acyltransferase, found in Prochlorococcus marinus (strain MIT 9301).